The primary structure comprises 263 residues: Oxidoreductase UcpA (263 aa).

Residue leucine 10 to asparagine 32 participates in NAD(+) binding. Position 141 (serine 141) interacts with substrate. Tyrosine 155 serves as the catalytic Proton acceptor.

Belongs to the short-chain dehydrogenases/reductases (SDR) family.

The protein is Oxidoreductase UcpA (ucpA) of Escherichia coli (strain K12).